The following is a 144-amino-acid chain: Large ribosomal subunit protein uL13 (144 aa).

The protein belongs to the universal ribosomal protein uL13 family. In terms of assembly, part of the 50S ribosomal subunit.

Its function is as follows. This protein is one of the early assembly proteins of the 50S ribosomal subunit, although it is not seen to bind rRNA by itself. It is important during the early stages of 50S assembly. This Clostridium botulinum (strain ATCC 19397 / Type A) protein is Large ribosomal subunit protein uL13.